Reading from the N-terminus, the 343-residue chain is UDP-N-acetylglucosamine--N-acetylmuramyl-(pentapeptide) pyrophosphoryl-undecaprenol N-acetylglucosamine transferase (343 aa).

Residues 10–12 (TGG), Asn-113, Ser-174, and Gln-275 contribute to the UDP-N-acetyl-alpha-D-glucosamine site.

The protein belongs to the glycosyltransferase 28 family. MurG subfamily.

The protein resides in the cell membrane. It catalyses the reaction di-trans,octa-cis-undecaprenyl diphospho-N-acetyl-alpha-D-muramoyl-L-alanyl-D-glutamyl-meso-2,6-diaminopimeloyl-D-alanyl-D-alanine + UDP-N-acetyl-alpha-D-glucosamine = di-trans,octa-cis-undecaprenyl diphospho-[N-acetyl-alpha-D-glucosaminyl-(1-&gt;4)]-N-acetyl-alpha-D-muramoyl-L-alanyl-D-glutamyl-meso-2,6-diaminopimeloyl-D-alanyl-D-alanine + UDP + H(+). It functions in the pathway cell wall biogenesis; peptidoglycan biosynthesis. Functionally, cell wall formation. Catalyzes the transfer of a GlcNAc subunit on undecaprenyl-pyrophosphoryl-MurNAc-pentapeptide (lipid intermediate I) to form undecaprenyl-pyrophosphoryl-MurNAc-(pentapeptide)GlcNAc (lipid intermediate II). The sequence is that of UDP-N-acetylglucosamine--N-acetylmuramyl-(pentapeptide) pyrophosphoryl-undecaprenol N-acetylglucosamine transferase from Wolbachia sp. subsp. Brugia malayi (strain TRS).